The chain runs to 67 residues: Large ribosomal subunit protein bL31 (67 aa).

Residues C16, C18, C38, and C41 each contribute to the Zn(2+) site.

It belongs to the bacterial ribosomal protein bL31 family. Type A subfamily. Part of the 50S ribosomal subunit. Zn(2+) is required as a cofactor.

Binds the 23S rRNA. The protein is Large ribosomal subunit protein bL31 of Thioalkalivibrio sulfidiphilus (strain HL-EbGR7).